The sequence spans 975 residues: Glycine dehydrogenase (decarboxylating) (975 aa).

Lys723 bears the N6-(pyridoxal phosphate)lysine mark.

This sequence belongs to the GcvP family. The glycine cleavage system is composed of four proteins: P, T, L and H. Requires pyridoxal 5'-phosphate as cofactor.

It catalyses the reaction N(6)-[(R)-lipoyl]-L-lysyl-[glycine-cleavage complex H protein] + glycine + H(+) = N(6)-[(R)-S(8)-aminomethyldihydrolipoyl]-L-lysyl-[glycine-cleavage complex H protein] + CO2. The glycine cleavage system catalyzes the degradation of glycine. The P protein binds the alpha-amino group of glycine through its pyridoxal phosphate cofactor; CO(2) is released and the remaining methylamine moiety is then transferred to the lipoamide cofactor of the H protein. This chain is Glycine dehydrogenase (decarboxylating), found in Burkholderia cenocepacia (strain HI2424).